A 453-amino-acid chain; its full sequence is tRNA-2-methylthio-N(6)-dimethylallyladenosine synthase (453 aa).

Positions 7–123 constitute an MTTase N-terminal domain; sequence GTYWITTFGC…LDTLLSQVEA (117 aa). [4Fe-4S] cluster-binding residues include Cys16, Cys52, Cys86, Cys158, Cys162, and Cys165. A Radical SAM core domain is found at 144-381; that stretch reads RDSSLCAWVN…NALVERKAKA (238 aa). In terms of domain architecture, TRAM spans 384–447; the sequence is QRYLGRVEEV…AFSLSGSAQA (64 aa).

This sequence belongs to the methylthiotransferase family. MiaB subfamily. As to quaternary structure, monomer. [4Fe-4S] cluster is required as a cofactor.

It localises to the cytoplasm. It carries out the reaction N(6)-dimethylallyladenosine(37) in tRNA + (sulfur carrier)-SH + AH2 + 2 S-adenosyl-L-methionine = 2-methylsulfanyl-N(6)-dimethylallyladenosine(37) in tRNA + (sulfur carrier)-H + 5'-deoxyadenosine + L-methionine + A + S-adenosyl-L-homocysteine + 2 H(+). Functionally, catalyzes the methylthiolation of N6-(dimethylallyl)adenosine (i(6)A), leading to the formation of 2-methylthio-N6-(dimethylallyl)adenosine (ms(2)i(6)A) at position 37 in tRNAs that read codons beginning with uridine. In Synechococcus sp. (strain RCC307), this protein is tRNA-2-methylthio-N(6)-dimethylallyladenosine synthase.